Consider the following 176-residue polypeptide: Ferritin, liver middle subunit (176 aa).

The region spanning 7 to 156 (QNYHRDCEAA…DFITNLSRMD (150 aa)) is the Ferritin-like diiron domain. The Fe cation site is built by Glu-24, Glu-59, His-62, Glu-104, and Gln-138.

It belongs to the ferritin family. In liver, forms a heteromer consisting of middle and heavy subunits. The functional molecule forms a roughly spherical shell with a diameter of 12 nm and contains a central cavity into which the insoluble mineral iron core is deposited. Liver (at protein level).

The catalysed reaction is 4 Fe(2+) + O2 + 4 H(+) = 4 Fe(3+) + 2 H2O. In terms of biological role, stores iron in a soluble, non-toxic, readily available form. Important for iron homeostasis. Has ferroxidase activity. Iron is taken up in the ferrous form and deposited as ferric hydroxides after oxidation. The polypeptide is Ferritin, liver middle subunit (Trematomus bernacchii (Emerald rockcod)).